The primary structure comprises 872 residues: Alanine--tRNA ligase (872 aa).

Zn(2+) is bound by residues H567, H571, C669, and H673.

The protein belongs to the class-II aminoacyl-tRNA synthetase family. The cofactor is Zn(2+).

Its subcellular location is the cytoplasm. The catalysed reaction is tRNA(Ala) + L-alanine + ATP = L-alanyl-tRNA(Ala) + AMP + diphosphate. Catalyzes the attachment of alanine to tRNA(Ala) in a two-step reaction: alanine is first activated by ATP to form Ala-AMP and then transferred to the acceptor end of tRNA(Ala). Also edits incorrectly charged Ser-tRNA(Ala) and Gly-tRNA(Ala) via its editing domain. The chain is Alanine--tRNA ligase from Streptococcus pneumoniae (strain CGSP14).